The primary structure comprises 250 residues: Bacteriorhodopsin (250 aa).

Over 1 to 18 the chain is Extracellular; the sequence is MCCAALAPPMAATVGPES. Residues 19 to 37 traverse the membrane as a helical segment; the sequence is IWLWIGTIGMTLGTLYFVG. Topologically, residues 38–51 are cytoplasmic; the sequence is RGRGVRDRKMQEFY. The chain crosses the membrane as a helical span at residues 52–70; it reads IITIFITTIAAAMYFAMAT. Residues 71-86 lie on the Extracellular side of the membrane; the sequence is GFGVTEVMVGDEALTI. Residues 87–104 form a helical membrane-spanning segment; the sequence is YWARYADWLFTTPLLLLD. Residues 105 to 115 are Cytoplasmic-facing; that stretch reads LSLLAGANRNT. A helical membrane pass occupies residues 116–135; it reads IATLIGLDVFMIGTGAIAAL. The Extracellular segment spans residues 136–142; it reads SSTPGTR. A helical membrane pass occupies residues 143–162; sequence IAWWAISTGALLALLYVLVG. Residues 163–180 are Cytoplasmic-facing; that stretch reads TLSENARNRAPEVASLFG. The chain crosses the membrane as a helical span at residues 181 to 199; that stretch reads RLRNLVIALWFLYPVVWIL. Residues 200-212 lie on the Extracellular side of the membrane; it reads GTEGTFGILPLYW. A helical transmembrane segment spans residues 213 to 232; the sequence is ETAAFMVLDLSAKVGFGVIL. Lys-225 is subject to N6-(retinylidene)lysine. The Cytoplasmic segment spans residues 233–250; it reads LQSRSVLERVATPTAAPT.

Belongs to the archaeal/bacterial/fungal opsin family.

It localises to the cell membrane. In terms of biological role, light-driven proton pump. The sequence is that of Bacteriorhodopsin (bop) from Haloterrigena sp. (strain arg-4).